Consider the following 154-residue polypeptide: Aspartate carbamoyltransferase regulatory chain (154 aa).

Zn(2+)-binding residues include Cys109, Cys114, Cys138, and Cys141.

This sequence belongs to the PyrI family. In terms of assembly, contains catalytic and regulatory chains. Zn(2+) serves as cofactor.

Involved in allosteric regulation of aspartate carbamoyltransferase. In Yersinia pestis, this protein is Aspartate carbamoyltransferase regulatory chain.